The chain runs to 70 residues: Small, acid-soluble spore protein alpha (70 aa).

This sequence belongs to the alpha/beta-type SASP family.

In terms of biological role, SASP are bound to spore DNA. They are double-stranded DNA-binding proteins that cause DNA to change to an a-like conformation. They protect the DNA backbone from chemical and enzymatic cleavage and are thus involved in dormant spore's high resistance to UV light. The sequence is that of Small, acid-soluble spore protein alpha from Paraclostridium bifermentans (Clostridium bifermentans).